Reading from the N-terminus, the 157-residue chain is SsrA-binding protein (157 aa).

This sequence belongs to the SmpB family.

The protein resides in the cytoplasm. Functionally, required for rescue of stalled ribosomes mediated by trans-translation. Binds to transfer-messenger RNA (tmRNA), required for stable association of tmRNA with ribosomes. tmRNA and SmpB together mimic tRNA shape, replacing the anticodon stem-loop with SmpB. tmRNA is encoded by the ssrA gene; the 2 termini fold to resemble tRNA(Ala) and it encodes a 'tag peptide', a short internal open reading frame. During trans-translation Ala-aminoacylated tmRNA acts like a tRNA, entering the A-site of stalled ribosomes, displacing the stalled mRNA. The ribosome then switches to translate the ORF on the tmRNA; the nascent peptide is terminated with the 'tag peptide' encoded by the tmRNA and targeted for degradation. The ribosome is freed to recommence translation, which seems to be the essential function of trans-translation. The protein is SsrA-binding protein of Elusimicrobium minutum (strain Pei191).